Reading from the N-terminus, the 183-residue chain is Large ribosomal subunit protein uL6 (183 aa).

It belongs to the universal ribosomal protein uL6 family. As to quaternary structure, part of the 50S ribosomal subunit.

This protein binds to the 23S rRNA, and is important in its secondary structure. It is located near the subunit interface in the base of the L7/L12 stalk, and near the tRNA binding site of the peptidyltransferase center. This Mycoplasmoides gallisepticum (strain R(low / passage 15 / clone 2)) (Mycoplasma gallisepticum) protein is Large ribosomal subunit protein uL6.